Here is a 560-residue protein sequence, read N- to C-terminus: Kinesin light chain 1 (560 aa).

Residues 31-99 (VIQGLEALKN…MALSNHLNAV (69 aa)) adopt a coiled-coil conformation. The span at 155–176 (KKYDDDISPSEDKDTDSTKEPL) shows a compositional bias: basic and acidic residues. A disordered region spans residues 155-203 (KKYDDDISPSEDKDTDSTKEPLDDLFPNDEDDPGQGIQQQHSSAAAAAQ). Serine 162 carries the post-translational modification Phosphoserine. Residues 192–203 (QQQHSSAAAAAQ) show a composition bias toward low complexity. TPR repeat units follow at residues 213 to 246 (LRTL…LEKT), 255 to 288 (ATML…REKT), 297 to 330 (AATL…REKV), 339 to 372 (AKQL…YQTK), and 381 to 414 (AKTK…AHER). The residue at position 449 (tyrosine 449) is a Phosphotyrosine. The residue at position 460 (serine 460) is a Phosphoserine. The stretch at 464–497 (TTTLKNLGALYRRQGKFEAAETLEEAAMRSRKQG) is one TPR 6 repeat. Phosphoserine; by AMPK occurs at positions 521 and 524.

It belongs to the kinesin light chain family. Oligomeric complex composed of two heavy chains and two light chains. Interacts with SPAG9. Interacts with ATCAY; may link mitochondria to KLC1 and regulate mitochondria localization into neuron projections. Interacts (via TPR repeats) with TOR1A; the interaction associates TOR1A with the kinesin oligomeric complex. Interacts with BORCS5. Interacts with MAPK8IP3/JIP3 and NTRK2/TRKB; interaction with NTRK2/TRKB is mediated by MAPK8IP3/JIP3. Interacts with CLSTN1; phosphorylation at Ser-460 inhibits interaction with CLSTN1. Post-translationally, phosphorylation at Ser-460 by ERK inhibits interaction with CLSTN1 and localization to cytoplasmic vesicles.

It localises to the cell projection. The protein localises to the growth cone. Its subcellular location is the cytoplasmic vesicle. It is found in the cytoplasm. The protein resides in the cytoskeleton. Functionally, kinesin is a microtubule-associated force-producing protein that may play a role in organelle transport. The light chain may function in coupling of cargo to the heavy chain or in the modulation of its ATPase activity. The protein is Kinesin light chain 1 (KLC1) of Pongo abelii (Sumatran orangutan).